Consider the following 154-residue polypeptide: 6,7-dimethyl-8-ribityllumazine synthase (154 aa).

5-amino-6-(D-ribitylamino)uracil-binding positions include phenylalanine 21, 55–57, and 79–81; these read AFE and CVI. 84 to 85 is a binding site for (2S)-2-hydroxy-3-oxobutyl phosphate; that stretch reads AT. Histidine 87 (proton donor) is an active-site residue. Phenylalanine 112 serves as a coordination point for 5-amino-6-(D-ribitylamino)uracil. Arginine 126 lines the (2S)-2-hydroxy-3-oxobutyl phosphate pocket.

The protein belongs to the DMRL synthase family. Forms an icosahedral capsid composed of 60 subunits, arranged as a dodecamer of pentamers.

The enzyme catalyses (2S)-2-hydroxy-3-oxobutyl phosphate + 5-amino-6-(D-ribitylamino)uracil = 6,7-dimethyl-8-(1-D-ribityl)lumazine + phosphate + 2 H2O + H(+). It participates in cofactor biosynthesis; riboflavin biosynthesis; riboflavin from 2-hydroxy-3-oxobutyl phosphate and 5-amino-6-(D-ribitylamino)uracil: step 1/2. In terms of biological role, catalyzes the formation of 6,7-dimethyl-8-ribityllumazine by condensation of 5-amino-6-(D-ribitylamino)uracil with 3,4-dihydroxy-2-butanone 4-phosphate. This is the penultimate step in the biosynthesis of riboflavin. The protein is 6,7-dimethyl-8-ribityllumazine synthase of Staphylococcus aureus (strain Mu50 / ATCC 700699).